A 178-amino-acid chain; its full sequence is MAELATIARPYAEALFQSAKPAELAGCLEQLNELAQLAALPEVAALSNNPKVSADDLSKLLSGMVKTKLDGKVASFLNLINQNHRLAAVPEIAHQFEAMKNKSEGAAEVSITSAFPLEGSALNDLLSSLKKRFGGKELRPTIQVDPTLIGGVRIQVGDEVMDSSVKAQLAQMQASLGA.

The protein belongs to the ATPase delta chain family. F-type ATPases have 2 components, F(1) - the catalytic core - and F(0) - the membrane proton channel. F(1) has five subunits: alpha(3), beta(3), gamma(1), delta(1), epsilon(1). F(0) has three main subunits: a(1), b(2) and c(10-14). The alpha and beta chains form an alternating ring which encloses part of the gamma chain. F(1) is attached to F(0) by a central stalk formed by the gamma and epsilon chains, while a peripheral stalk is formed by the delta and b chains.

It is found in the cell membrane. Functionally, f(1)F(0) ATP synthase produces ATP from ADP in the presence of a proton or sodium gradient. F-type ATPases consist of two structural domains, F(1) containing the extramembraneous catalytic core and F(0) containing the membrane proton channel, linked together by a central stalk and a peripheral stalk. During catalysis, ATP synthesis in the catalytic domain of F(1) is coupled via a rotary mechanism of the central stalk subunits to proton translocation. Its function is as follows. This protein is part of the stalk that links CF(0) to CF(1). It either transmits conformational changes from CF(0) to CF(1) or is implicated in proton conduction. This chain is ATP synthase subunit delta, found in Polynucleobacter asymbioticus (strain DSM 18221 / CIP 109841 / QLW-P1DMWA-1) (Polynucleobacter necessarius subsp. asymbioticus).